Here is a 328-residue protein sequence, read N- to C-terminus: Probable transcription factor At4g00610 (328 aa).

Residues 31 to 143 (AKNKTLVTPS…ERAKTETETG (113 aa)) are disordered. Residues 35 to 54 (TLVTPSTVKKSSDVASTSKK) are compositionally biased toward polar residues. Acidic residues predominate over residues 84-108 (SEEEEEDEPSSDSESGSESESDTEA). Residues 122-143 (NEKRQSEGKPEEERAKTETETG) are compositionally biased toward basic and acidic residues.

This sequence belongs to the GeBP family.

This Arabidopsis thaliana (Mouse-ear cress) protein is Probable transcription factor At4g00610.